A 289-amino-acid chain; its full sequence is 4-hydroxy-tetrahydrodipicolinate synthase (289 aa).

Thr-44 lines the pyruvate pocket. The active-site Proton donor/acceptor is Tyr-130. Lys-158 acts as the Schiff-base intermediate with substrate in catalysis. Ile-200 is a binding site for pyruvate.

This sequence belongs to the DapA family. Homotetramer; dimer of dimers.

It is found in the cytoplasm. The enzyme catalyses L-aspartate 4-semialdehyde + pyruvate = (2S,4S)-4-hydroxy-2,3,4,5-tetrahydrodipicolinate + H2O + H(+). Its pathway is amino-acid biosynthesis; L-lysine biosynthesis via DAP pathway; (S)-tetrahydrodipicolinate from L-aspartate: step 3/4. Its function is as follows. Catalyzes the condensation of (S)-aspartate-beta-semialdehyde [(S)-ASA] and pyruvate to 4-hydroxy-tetrahydrodipicolinate (HTPA). The sequence is that of 4-hydroxy-tetrahydrodipicolinate synthase from Archaeoglobus fulgidus (strain ATCC 49558 / DSM 4304 / JCM 9628 / NBRC 100126 / VC-16).